The chain runs to 494 residues: Ketol-acid reductoisomerase (NADP(+)) (494 aa).

The region spanning 14–208 (LDQLGRCRFM…GGHRAGCLAS (195 aa)) is the KARI N-terminal Rossmann domain. Residues 45 to 48 (CGAQ), Arg68, Arg76, Ser78, and 108 to 110 (DKQ) contribute to the NADP(+) site. His132 is a catalytic residue. Gly158 provides a ligand contact to NADP(+). 2 consecutive KARI C-terminal knotted domains span residues 209 to 344 (SFVA…NYPT) and 345 to 487 (TDVK…MKDM). Residues Asp217, Glu221, Glu389, and Glu393 each contribute to the Mg(2+) site. Residue Ser414 participates in substrate binding.

This sequence belongs to the ketol-acid reductoisomerase family. The cofactor is Mg(2+).

The catalysed reaction is (2R)-2,3-dihydroxy-3-methylbutanoate + NADP(+) = (2S)-2-acetolactate + NADPH + H(+). It catalyses the reaction (2R,3R)-2,3-dihydroxy-3-methylpentanoate + NADP(+) = (S)-2-ethyl-2-hydroxy-3-oxobutanoate + NADPH + H(+). Its pathway is amino-acid biosynthesis; L-isoleucine biosynthesis; L-isoleucine from 2-oxobutanoate: step 2/4. The protein operates within amino-acid biosynthesis; L-valine biosynthesis; L-valine from pyruvate: step 2/4. Its function is as follows. Involved in the biosynthesis of branched-chain amino acids (BCAA). Catalyzes an alkyl-migration followed by a ketol-acid reduction of (S)-2-acetolactate (S2AL) to yield (R)-2,3-dihydroxy-isovalerate. In the isomerase reaction, S2AL is rearranged via a Mg-dependent methyl migration to produce 3-hydroxy-3-methyl-2-ketobutyrate (HMKB). In the reductase reaction, this 2-ketoacid undergoes a metal-dependent reduction by NADPH to yield (R)-2,3-dihydroxy-isovalerate. This chain is Ketol-acid reductoisomerase (NADP(+)), found in Vibrio cholerae serotype O1 (strain ATCC 39541 / Classical Ogawa 395 / O395).